The sequence spans 158 residues: Transcription elongation factor GreB (158 aa).

Positions 53 to 75 (KRRLREIDRRVRFLTKRLEVLQI) form a coiled coil.

Belongs to the GreA/GreB family. GreB subfamily.

Functionally, necessary for efficient RNA polymerase transcription elongation past template-encoded arresting sites. The arresting sites in DNA have the property of trapping a certain fraction of elongating RNA polymerases that pass through, resulting in locked ternary complexes. Cleavage of the nascent transcript by cleavage factors such as GreA or GreB allows the resumption of elongation from the new 3'terminus. GreB releases sequences of up to 9 nucleotides in length. In Haemophilus influenzae (strain ATCC 51907 / DSM 11121 / KW20 / Rd), this protein is Transcription elongation factor GreB.